The primary structure comprises 254 residues: Ribonuclease HII (254 aa).

Positions 70-254 (QAIAGIDEVG…TFEPVKSMLG (185 aa)) constitute an RNase H type-2 domain. A divalent metal cation is bound by residues aspartate 76, glutamate 77, and aspartate 168.

The protein belongs to the RNase HII family. It depends on Mn(2+) as a cofactor. Requires Mg(2+) as cofactor.

It is found in the cytoplasm. The enzyme catalyses Endonucleolytic cleavage to 5'-phosphomonoester.. In terms of biological role, endonuclease that specifically degrades the RNA of RNA-DNA hybrids. This Streptococcus gordonii (strain Challis / ATCC 35105 / BCRC 15272 / CH1 / DL1 / V288) protein is Ribonuclease HII.